Here is a 924-residue protein sequence, read N- to C-terminus: LPS-assembly protein LptD (924 aa).

Positions 1-33 (MAVKSLVFRRKFPLLVTGSLLALQPVAALTVQA) are cleaved as a signal peptide. Residues 58–102 (NLPPRPAHTATSVSTAAAGSSVSGSGGETVEAEPTQRLVTESGGR) are disordered. Positions 66 to 90 (TATSVSTAAAGSSVSGSGGETVEAE) are enriched in low complexity.

It belongs to the LptD family. As to quaternary structure, component of the lipopolysaccharide transport and assembly complex. Interacts with LptE and LptA.

The protein resides in the cell outer membrane. In terms of biological role, together with LptE, is involved in the assembly of lipopolysaccharide (LPS) at the surface of the outer membrane. The polypeptide is LPS-assembly protein LptD (Pseudomonas aeruginosa (strain UCBPP-PA14)).